The chain runs to 436 residues: Methylenetetrahydrofolate--tRNA-(uracil-5-)-methyltransferase TrmFO (436 aa).

9-14 (GAGLAG) contributes to the FAD binding site.

It belongs to the MnmG family. TrmFO subfamily. Requires FAD as cofactor.

The protein localises to the cytoplasm. It carries out the reaction uridine(54) in tRNA + (6R)-5,10-methylene-5,6,7,8-tetrahydrofolate + NADH + H(+) = 5-methyluridine(54) in tRNA + (6S)-5,6,7,8-tetrahydrofolate + NAD(+). The catalysed reaction is uridine(54) in tRNA + (6R)-5,10-methylene-5,6,7,8-tetrahydrofolate + NADPH + H(+) = 5-methyluridine(54) in tRNA + (6S)-5,6,7,8-tetrahydrofolate + NADP(+). Functionally, catalyzes the folate-dependent formation of 5-methyl-uridine at position 54 (M-5-U54) in all tRNAs. This is Methylenetetrahydrofolate--tRNA-(uracil-5-)-methyltransferase TrmFO from Ligilactobacillus salivarius (strain UCC118) (Lactobacillus salivarius).